The sequence spans 468 residues: UDP-N-acetylmuramoyl-L-alanine--L-glutamate ligase (468 aa).

122-128 is an ATP binding site; sequence GTKGKST.

This sequence belongs to the MurCDEF family. MurD2 subfamily.

The protein resides in the cytoplasm. It carries out the reaction UDP-N-acetyl-alpha-D-muramoyl-L-alanine + L-glutamate + ATP = UDP-N-acetyl-alpha-D-muramoyl-L-alanyl-L-glutamate + ADP + phosphate + H(+). The protein operates within cell wall biogenesis; peptidoglycan biosynthesis. Its function is as follows. Cell wall formation. Catalyzes the addition of L-glutamate to the nucleotide precursor UDP-N-acetylmuramoyl-L-alanine. This Xanthomonas euvesicatoria pv. vesicatoria (strain 85-10) (Xanthomonas campestris pv. vesicatoria) protein is UDP-N-acetylmuramoyl-L-alanine--L-glutamate ligase.